A 277-amino-acid polypeptide reads, in one-letter code: MDKALVSPIEDAFARYSTLTVEEIEDSIRPTVNRVIDGLETGAFRVAEPDNHGGWKVNEWLKKAVLLYFRVHDTMIVDAQPAPFWDKIESRFSGYDAAKFRAAGVRVVPGAIARRGSYFGKDVVLMPSFTNIGAYVGEGTMIDTWATVGSCAQLGAHCHLSGGAAIGGVLEPLQASPAIIEDHCFIGARSEIVEGVIVGHHSVISMGVFISQSTRIYNRATGEISYGYVPPYSVVVSGQLPAKDGTHSLYCAVIVKQVDEKTRAKTSINELLRGFAD.

Arg-106 and Asp-143 together coordinate substrate.

This sequence belongs to the transferase hexapeptide repeat family. Homotrimer.

It localises to the cytoplasm. The enzyme catalyses (S)-2,3,4,5-tetrahydrodipicolinate + succinyl-CoA + H2O = (S)-2-succinylamino-6-oxoheptanedioate + CoA. It participates in amino-acid biosynthesis; L-lysine biosynthesis via DAP pathway; LL-2,6-diaminopimelate from (S)-tetrahydrodipicolinate (succinylase route): step 1/3. The chain is 2,3,4,5-tetrahydropyridine-2,6-dicarboxylate N-succinyltransferase from Xylella fastidiosa (strain 9a5c).